We begin with the raw amino-acid sequence, 310 residues long: DNA-directed RNA polymerase subunit alpha (310 aa).

Positions 1-230 (MLGKVNGVQI…KLFNPLRVLD (230 aa)) are alpha N-terminal domain (alpha-NTD). The alpha C-terminal domain (alpha-CTD) stretch occupies residues 242 to 310 (NSLIKQKLIE…YKKFGVKLKH (69 aa)).

The protein belongs to the RNA polymerase alpha chain family. In plastids the minimal PEP RNA polymerase catalytic core is composed of four subunits: alpha, beta, beta', and beta''. When a (nuclear-encoded) sigma factor is associated with the core the holoenzyme is formed, which can initiate transcription.

Its subcellular location is the plastid. The protein resides in the chloroplast. It catalyses the reaction RNA(n) + a ribonucleoside 5'-triphosphate = RNA(n+1) + diphosphate. In terms of biological role, DNA-dependent RNA polymerase catalyzes the transcription of DNA into RNA using the four ribonucleoside triphosphates as substrates. The polypeptide is DNA-directed RNA polymerase subunit alpha (Cyanidium caldarium (Red alga)).